The sequence spans 104 residues: Large ribosomal subunit protein bL21 (104 aa).

Belongs to the bacterial ribosomal protein bL21 family. As to quaternary structure, part of the 50S ribosomal subunit. Contacts protein L20.

Its function is as follows. This protein binds to 23S rRNA in the presence of protein L20. This chain is Large ribosomal subunit protein bL21, found in Helicobacter pylori (strain P12).